We begin with the raw amino-acid sequence, 87 residues long: uncharacterized protein (87 aa).

The protein to A.fulgidus AF_0255 and AF_1348.

This is an uncharacterized protein from Archaeoglobus fulgidus (strain ATCC 49558 / DSM 4304 / JCM 9628 / NBRC 100126 / VC-16).